We begin with the raw amino-acid sequence, 394 residues long: V-type proton ATPase subunit C (394 aa).

Serine 17 is subject to Phosphoserine.

The protein belongs to the V-ATPase C subunit family. In terms of assembly, V-ATPase is a heteromultimeric enzyme composed of a peripheral catalytic V1 complex (components A to H) attached to an integral membrane V0 proton pore complex (components: a, c, c', c'', d, e, f and VOA1).

The protein localises to the cytoplasm. It is found in the vacuole membrane. Its function is as follows. Subunit of the V1 complex of vacuolar(H+)-ATPase (V-ATPase), a multisubunit enzyme composed of a peripheral complex (V1) that hydrolyzes ATP and a membrane integral complex (V0) that translocates protons. V-ATPase is responsible for acidifying and maintaining the pH of intracellular compartments. Subunit C is necessary for the assembly of the catalytic sector of the enzyme and is likely to have a specific function in its catalytic activity. Reversibly leaves the enzyme after glucose depletion, causing the catalytic subcomplex V1 to detach from the V0 section. This is V-type proton ATPase subunit C from Schizosaccharomyces pombe (strain 972 / ATCC 24843) (Fission yeast).